Consider the following 394-residue polypeptide: MLPAMKTVEAEEEYAEDCPELVPIETKHQEKEENLDFIIKIPVTIVTGYLGAGKTTLLNYILTEQHNRKIAVILNEFGEGSAVEKSLAVSQGGELYEEWLELRNGCLCCSVKDNGLKAIENLMQKKGKFDYILLETTGLADPGAVASMFWVDAELGSDIYLDGIITVVDSKYGLKHLTEEKPDGLVNEATRQVALADMILINKTDLVSEEELNKLRTTIRSINGLGKVLETQRSRTHLSNILDLHAYDTLSGISLQKKLQHVSTAPHLDQSIVTVTFDVPGSAEEESLNVFIQNLLWEKNVKNKDGRCMEVIRLKGLVSIKDKPQQMIVQGIHELYELEESRVNWKDDAERACQLVFIGKNLDKDILQQLFITAVAETKEQTTAPGQDGACPPH.

The psi-PxLVp motif signature appears at 16-23; that stretch reads EDCPELVP. 48–55 contacts GTP; it reads GYLGAGKT. Residues C106, C108, and C109 each coordinate Zn(2+). A CXCC motif motif is present at residues 106–109; it reads CLCC. GTP is bound by residues 109-113 and 202-205; these read CSVKD and NKTD. Residues 272–375 form the CobW C-terminal domain; it reads IVTVTFDVPG…ILQQLFITAV (104 aa).

It belongs to the SIMIBI class G3E GTPase family. ZNG1 subfamily.

Its subcellular location is the nucleus. It carries out the reaction GTP + H2O = GDP + phosphate + H(+). Functionally, zinc chaperone that directly transfers zinc cofactor to target metalloproteins, thereby activating them. Catalyzes zinc insertion into the active site of methionine aminopeptidase METAP1, which function to cleave the initiator methionine from polypeptides during or after protein translation. Mechanistically, the N-terminal psi-PxLVp motif binds to the C6H2-type zinc finger of inactive form of METAP1. After formation of the docked complex, zinc is transferred from the CXCC motif in the GTPase domain of ZNG1 to the zinc binding site in the peptidase domain of METAP1 in a process requiring GTP hydrolysis. GTP/GDP exchange is required for release of active METAP1. The chain is Zinc-regulated GTPase metalloprotein activator 1 (Zng1) from Rattus norvegicus (Rat).